Consider the following 77-residue polypeptide: Large ribosomal subunit protein eL20 (77 aa).

It belongs to the eukaryotic ribosomal protein eL20 family. As to quaternary structure, part of the 50S ribosomal subunit. Binds 23S rRNA.

The chain is Large ribosomal subunit protein eL20 from Pyrococcus horikoshii (strain ATCC 700860 / DSM 12428 / JCM 9974 / NBRC 100139 / OT-3).